Reading from the N-terminus, the 445-residue chain is Phosphoglucosamine mutase (445 aa).

The active-site Phosphoserine intermediate is Ser102. Positions 102, 241, 243, and 245 each coordinate Mg(2+). Ser102 carries the post-translational modification Phosphoserine.

This sequence belongs to the phosphohexose mutase family. It depends on Mg(2+) as a cofactor. Post-translationally, activated by phosphorylation.

The enzyme catalyses alpha-D-glucosamine 1-phosphate = D-glucosamine 6-phosphate. Functionally, catalyzes the conversion of glucosamine-6-phosphate to glucosamine-1-phosphate. The protein is Phosphoglucosamine mutase of Haemophilus influenzae (strain ATCC 51907 / DSM 11121 / KW20 / Rd).